We begin with the raw amino-acid sequence, 38 residues long: Large ribosomal subunit protein bL36 (38 aa).

The protein belongs to the bacterial ribosomal protein bL36 family.

This chain is Large ribosomal subunit protein bL36, found in Buchnera aphidicola subsp. Cinara cedri (strain Cc).